The sequence spans 757 residues: Lysyl oxidase homolog 4 (757 aa).

Residues 1-25 (MWFLPAALPLLPLLLLLGQAPPSRP) form the signal peptide. SRCR domains lie at 33-134 (LRLV…VVCN), 160-288 (VRLK…VSCV), 312-412 (VRLR…VRCN), and 422-530 (VRLA…VSCT). 17 disulfides stabilise this stretch: Cys-59-Cys-123, Cys-72-Cys-133, Cys-103-Cys-113, Cys-192-Cys-277, Cys-205-Cys-287, Cys-252-Cys-262, Cys-337-Cys-401, Cys-350-Cys-411, Cys-381-Cys-391, Cys-451-Cys-516, Cys-464-Cys-529, Cys-498-Cys-508, Cys-559-Cys-565, Cys-611-Cys-659, Cys-643-Cys-649, Cys-671-Cys-681, and Cys-718-Cys-732. Asn-199 carries N-linked (GlcNAc...) asparagine glycosylation. The lysyl-oxidase like stretch occupies residues 534–737 (PDLVMNAQLV…WLHNCHTGDS (204 aa)). Cu cation-binding residues include His-612, His-614, and His-616. An N-linked (GlcNAc...) asparagine glycan is attached at Asn-630. Residues 639–675 (KASFCLEDTNCPTGMQRRYACANFGEQGVTVGCWDTY) constitute a cross-link (lysine tyrosylquinone (Lys-Tyr)). At Tyr-675 the chain carries 2',4',5'-topaquinone.

The protein belongs to the lysyl oxidase family. Requires Cu cation as cofactor. Lysine tyrosylquinone residue serves as cofactor. Post-translationally, the lysine tyrosylquinone cross-link (LTQ) is generated by condensation of the epsilon-amino group of a lysine with a topaquinone produced by oxidation of tyrosine. May be proteolytically cleaved by BMP1.

The protein resides in the secreted. It localises to the extracellular space. It catalyses the reaction L-lysyl-[protein] + O2 + H2O = (S)-2-amino-6-oxohexanoyl-[protein] + H2O2 + NH4(+). Functionally, catalyzes the oxidative deamination of lysine and hydroxylysine residues in collagen and elastin, resulting in the formation of covalent cross-linkages, and the stabilization of collagen and elastin fibers. This chain is Lysyl oxidase homolog 4 (LOXL4), found in Bos taurus (Bovine).